We begin with the raw amino-acid sequence, 76 residues long: UPF0154 protein Exig_1099 (76 aa).

Residues 4 to 24 form a helical membrane-spanning segment; that stretch reads WIWILIALLCLVAGVALGFYI. The interval 54–76 is disordered; the sequence is KPSQKKVNQVMRSMSGSMKSPKK.

This sequence belongs to the UPF0154 family.

It is found in the cell membrane. The polypeptide is UPF0154 protein Exig_1099 (Exiguobacterium sibiricum (strain DSM 17290 / CCUG 55495 / CIP 109462 / JCM 13490 / 255-15)).